Consider the following 372-residue polypeptide: Glutamate 5-kinase (372 aa).

ATP is bound at residue Lys14. Substrate is bound by residues Ser54, Asp141, and Asn153. Residues 173–174 (TD) and 215–221 (TGGMATK) contribute to the ATP site. The region spanning 280–358 (RGQLVIDAGA…DSIEEVLGYD (79 aa)) is the PUA domain.

This sequence belongs to the glutamate 5-kinase family.

The protein resides in the cytoplasm. It catalyses the reaction L-glutamate + ATP = L-glutamyl 5-phosphate + ADP. Its pathway is amino-acid biosynthesis; L-proline biosynthesis; L-glutamate 5-semialdehyde from L-glutamate: step 1/2. Its function is as follows. Catalyzes the transfer of a phosphate group to glutamate to form L-glutamate 5-phosphate. The chain is Glutamate 5-kinase from Shewanella pealeana (strain ATCC 700345 / ANG-SQ1).